A 629-amino-acid chain; its full sequence is tRNA uridine 5-carboxymethylaminomethyl modification enzyme MnmG (629 aa).

Residue 14–19 coordinates FAD; it reads GAGHAG. 274–288 serves as a coordination point for NAD(+); the sequence is GPRYCPSIEDKVVRF.

It belongs to the MnmG family. As to quaternary structure, homodimer. Heterotetramer of two MnmE and two MnmG subunits. FAD is required as a cofactor.

It is found in the cytoplasm. In terms of biological role, NAD-binding protein involved in the addition of a carboxymethylaminomethyl (cmnm) group at the wobble position (U34) of certain tRNAs, forming tRNA-cmnm(5)s(2)U34. The sequence is that of tRNA uridine 5-carboxymethylaminomethyl modification enzyme MnmG from Xylella fastidiosa (strain 9a5c).